A 425-amino-acid polypeptide reads, in one-letter code: MREPDFLNHFLKKGYFKKHAKAVLALSGGLDSMFLFKVLSTYQKELEIELILAHVNHKQRIESDWEEKELRKLAAEAELPIYISNFSGEFSEARARNFRYDFFQEVMKKTGATALVTAHHADDQVETILMRLIRGTRLRYLSGIKEKQVVGEIEIIRPFLHFQKKDFPSIFHFEDTSNQENHYFRNRIRNSYLPELEKENPRFRDAILGIGNEILDYDLAIAELSNNINVEDLQQLFSYSESTQRVLLQTYLNRFPDLNLTKAQFAEVQQILKSKSQYRHPIKNGYELIKEYQQFQICKISPQADEEEDEFVLHYQNQVAYQGYLFSFGLPLEGESIQQIPVSRETSIHIRHRKTGDVLIQNGHRKKLRRLFIDLKIPMEKRNSALIIEQFGEIVSILGIATNNLSKKTKNDIMNTVLYIEKIDR.

27 to 32 is an ATP binding site; that stretch reads SGGLDS.

It belongs to the tRNA(Ile)-lysidine synthase family.

The protein resides in the cytoplasm. The enzyme catalyses cytidine(34) in tRNA(Ile2) + L-lysine + ATP = lysidine(34) in tRNA(Ile2) + AMP + diphosphate + H(+). Its function is as follows. Ligates lysine onto the cytidine present at position 34 of the AUA codon-specific tRNA(Ile) that contains the anticodon CAU, in an ATP-dependent manner. Cytidine is converted to lysidine, thus changing the amino acid specificity of the tRNA from methionine to isoleucine. In Streptococcus pneumoniae (strain Hungary19A-6), this protein is tRNA(Ile)-lysidine synthase.